Here is a 1538-residue protein sequence, read N- to C-terminus: Ferredoxin-dependent glutamate synthase (1538 aa).

The active-site For GATase activity is C34. A Glutamine amidotransferase type-2 domain is found at C34–F431. L1109 to R1166 contacts FMN. [3Fe-4S] cluster-binding residues include C1162, C1168, and C1173.

The protein belongs to the glutamate synthase family. Monomer. [3Fe-4S] cluster serves as cofactor. FAD is required as a cofactor. It depends on FMN as a cofactor.

The protein localises to the plastid. The protein resides in the chloroplast stroma. The catalysed reaction is 2 oxidized [2Fe-2S]-[ferredoxin] + 2 L-glutamate = L-glutamine + 2 reduced [2Fe-2S]-[ferredoxin] + 2-oxoglutarate + 2 H(+). Its pathway is amino-acid biosynthesis; L-glutamate biosynthesis via GLT pathway; L-glutamate from 2-oxoglutarate and L-glutamine (ferredoxin route): step 1/1. It participates in energy metabolism; nitrogen metabolism. The chain is Ferredoxin-dependent glutamate synthase (gltB) from Pyropia yezoensis (Susabi-nori).